A 435-amino-acid polypeptide reads, in one-letter code: CUB and peptidase domain-containing protein 1 (435 aa).

Residues 1–16 (SGFHLSFSFFRRAVCG) form the signal peptide. Positions 25 to 261 (IVGGTVAPIN…LKSWITGKIS (237 aa)) constitute a Peptidase S1 domain. The cysteines at positions 50 and 66 are disulfide-linked. Catalysis depends on charge relay system residues His65 and Asp116. Cystine bridges form between Cys151-Cys218, Cys182-Cys197, Cys208-Cys237, and Cys322-Cys341. Ser212 serves as the catalytic Charge relay system. Residues 256 to 378 (ITGKISRSPA…SGFHLSFSFF (123 aa)) form the CUB domain.

This sequence belongs to the peptidase S1 family. In terms of tissue distribution, component of the acid-insoluble organic matrix of the aragonitic skeleton (at protein level).

It localises to the secreted. The polypeptide is CUB and peptidase domain-containing protein 1 (Acropora millepora (Staghorn coral)).